Here is a 388-residue protein sequence, read N- to C-terminus: 8-amino-7-oxononanoate synthase (388 aa).

Arginine 20 is a substrate binding site. 107–108 (GY) is a pyridoxal 5'-phosphate binding site. Residue histidine 132 participates in substrate binding. Serine 178, histidine 206, and threonine 237 together coordinate pyridoxal 5'-phosphate. The residue at position 240 (lysine 240) is an N6-(pyridoxal phosphate)lysine. Residue threonine 356 coordinates substrate.

The protein belongs to the class-II pyridoxal-phosphate-dependent aminotransferase family. BioF subfamily. In terms of assembly, homodimer. Pyridoxal 5'-phosphate is required as a cofactor.

The enzyme catalyses 6-carboxyhexanoyl-[ACP] + L-alanine + H(+) = (8S)-8-amino-7-oxononanoate + holo-[ACP] + CO2. It functions in the pathway cofactor biosynthesis; biotin biosynthesis. Catalyzes the decarboxylative condensation of pimeloyl-[acyl-carrier protein] and L-alanine to produce 8-amino-7-oxononanoate (AON), [acyl-carrier protein], and carbon dioxide. The polypeptide is 8-amino-7-oxononanoate synthase (Herminiimonas arsenicoxydans).